Reading from the N-terminus, the 315-residue chain is MSDASFDRSMPLSGEGSFGDYFALLKPRVMSLVVFTALVGLLVAPVSLHPMVGFCAILFIAVGAGASGALNMWWDADIDVIMKRTAGRPVPAGKVQPGEALALGLGLSGLSVVMLALATNLLAAGLLAFTIFFYAVVYSMWLKRSTPQNIVIGGAAGAFPPMIGWVAATGSVSLEAVLMFALIFMWTPPHFWALALFMKSDYHDAGVPMLTVTHGRKSTRTHILVYTVLLVPVALGLALTPVAGPLYLATALVLNAIFLKGAWDIWRRDEAQAEADKYATEKRFFKFSLLYLALHFTALLAEAILTRSGLWTFGG.

The next 9 helical transmembrane spans lie at 21–41 (YFALLKPRVMSLVVFTALVGL), 52–74 (VGFCAILFIAVGAGASGALNMWW), 98–118 (GEALALGLGLSGLSVVMLALA), 121–141 (LLAAGLLAFTIFFYAVVYSMW), 150–170 (IVIGGAAGAFPPMIGWVAATG), 177–197 (VLMFALIFMWTPPHFWALALF), 223–243 (ILVYTVLLVPVALGLALTPVA), 246–266 (LYLATALVLNAIFLKGAWDIW), and 284–304 (FFKFSLLYLALHFTALLAEAI).

This sequence belongs to the UbiA prenyltransferase family. Protoheme IX farnesyltransferase subfamily. Interacts with CtaA.

The protein localises to the cell inner membrane. It catalyses the reaction heme b + (2E,6E)-farnesyl diphosphate + H2O = Fe(II)-heme o + diphosphate. Its pathway is porphyrin-containing compound metabolism; heme O biosynthesis; heme O from protoheme: step 1/1. Converts heme B (protoheme IX) to heme O by substitution of the vinyl group on carbon 2 of heme B porphyrin ring with a hydroxyethyl farnesyl side group. The protein is Protoheme IX farnesyltransferase of Dinoroseobacter shibae (strain DSM 16493 / NCIMB 14021 / DFL 12).